A 150-amino-acid chain; its full sequence is Large ribosomal subunit protein eL19 (150 aa).

Positions S59–M89 are disordered. A compositionally biased stretch (basic residues) spans Y61–M89.

This sequence belongs to the eukaryotic ribosomal protein eL19 family. Part of the 50S ribosomal subunit.

Functionally, binds to the 23S rRNA. The polypeptide is Large ribosomal subunit protein eL19 (Pyrococcus horikoshii (strain ATCC 700860 / DSM 12428 / JCM 9974 / NBRC 100139 / OT-3)).